Consider the following 157-residue polypeptide: ABA-responsive protein ABR17 (157 aa).

This sequence belongs to the BetVI family.

This Pisum sativum (Garden pea) protein is ABA-responsive protein ABR17.